Here is a 333-residue protein sequence, read N- to C-terminus: Glycerol-3-phosphate dehydrogenase [NAD(P)+] (333 aa).

The NADPH site is built by serine 10, tryptophan 11, histidine 31, arginine 32, and lysine 105. Sn-glycerol 3-phosphate contacts are provided by lysine 105, glycine 136, and serine 138. NADPH is bound at residue alanine 140. Sn-glycerol 3-phosphate contacts are provided by lysine 191, aspartate 244, serine 254, arginine 255, and asparagine 256. Lysine 191 (proton acceptor) is an active-site residue. An NADPH-binding site is contributed by arginine 255. 2 residues coordinate NADPH: isoleucine 279 and glutamate 281.

The protein belongs to the NAD-dependent glycerol-3-phosphate dehydrogenase family.

It localises to the cytoplasm. It carries out the reaction sn-glycerol 3-phosphate + NAD(+) = dihydroxyacetone phosphate + NADH + H(+). The catalysed reaction is sn-glycerol 3-phosphate + NADP(+) = dihydroxyacetone phosphate + NADPH + H(+). The protein operates within membrane lipid metabolism; glycerophospholipid metabolism. Its function is as follows. Catalyzes the reduction of the glycolytic intermediate dihydroxyacetone phosphate (DHAP) to sn-glycerol 3-phosphate (G3P), the key precursor for phospholipid synthesis. This Pelodictyon phaeoclathratiforme (strain DSM 5477 / BU-1) protein is Glycerol-3-phosphate dehydrogenase [NAD(P)+].